Consider the following 193-residue polypeptide: Ion-translocating oxidoreductase complex subunit A (193 aa).

The next 6 membrane-spanning stretches (helical) occupy residues 5–25 (LLLF…FLGL), 47–67 (FVMT…LVPL), 72–92 (LRTL…EMVV), 102–122 (LLGI…VALL), 134–154 (AVYG…FAAI), and 171–191 (SIAL…TGLV).

This sequence belongs to the NqrDE/RnfAE family. The complex is composed of six subunits: RnfA, RnfB, RnfC, RnfD, RnfE and RnfG.

The protein resides in the cell inner membrane. In terms of biological role, part of a membrane-bound complex that couples electron transfer with translocation of ions across the membrane. This Serratia proteamaculans (strain 568) protein is Ion-translocating oxidoreductase complex subunit A.